The primary structure comprises 304 residues: Urease accessory protein UreD 2 (304 aa).

This sequence belongs to the UreD family. As to quaternary structure, ureD, UreF and UreG form a complex that acts as a GTP-hydrolysis-dependent molecular chaperone, activating the urease apoprotein by helping to assemble the nickel containing metallocenter of UreC. The UreE protein probably delivers the nickel.

The protein localises to the cytoplasm. Its function is as follows. Required for maturation of urease via the functional incorporation of the urease nickel metallocenter. Functionally, disrupting the ure2 operon has no effect on urease activity or pathogen survival in BALB/c mice when administered orally. The protein is Urease accessory protein UreD 2 of Brucella abortus (strain 2308).